A 213-amino-acid chain; its full sequence is MKNYYLVDEKRKTPVSTWEKISQALRRSVKLELFVGLFVMMRELLKRNNSATIKYPFEKVKLDNRYRAVHRLMRFIESENERCIGCGLCEKICISNCIRMETSLDENGRKKVGNYSINLGRCIYCGFCAEVCPELAIVHGIEYENAAEQRSYFGYKQDFLTPIDKLKNQVEFEGAGSLRKDANLWVKKTPNYYDVMQERVLENQNTKEQGENK.

2 consecutive 4Fe-4S ferredoxin-type domains span residues 74–103 (RFIE…METS) and 113–142 (GNYS…HGIE). Residues Cys-83, Cys-86, Cys-89, Cys-93, Cys-122, Cys-125, Cys-128, and Cys-132 each contribute to the [4Fe-4S] cluster site.

The protein belongs to the complex I 23 kDa subunit family. In terms of assembly, NDH-1 is composed of 14 different subunits. Subunits NuoA, H, J, K, L, M, N constitute the membrane sector of the complex. [4Fe-4S] cluster is required as a cofactor.

It localises to the cell inner membrane. It catalyses the reaction a quinone + NADH + 5 H(+)(in) = a quinol + NAD(+) + 4 H(+)(out). In terms of biological role, NDH-1 shuttles electrons from NADH, via FMN and iron-sulfur (Fe-S) centers, to quinones in the respiratory chain. The immediate electron acceptor for the enzyme in this species is believed to be ubiquinone. Couples the redox reaction to proton translocation (for every two electrons transferred, four hydrogen ions are translocated across the cytoplasmic membrane), and thus conserves the redox energy in a proton gradient. The chain is NADH-quinone oxidoreductase subunit I from Campylobacter jejuni subsp. doylei (strain ATCC BAA-1458 / RM4099 / 269.97).